We begin with the raw amino-acid sequence, 178 residues long: Large ribosomal subunit protein uL5 (178 aa).

An N-acetylalanine modification is found at Ala2. Residue Lys38 forms a Glycyl lysine isopeptide (Lys-Gly) (interchain with G-Cter in SUMO2) linkage. Thr44 and Thr47 each carry phosphothreonine. An N6-acetyllysine; alternate modification is found at Lys52. Lys52 participates in a covalent cross-link: Glycyl lysine isopeptide (Lys-Gly) (interchain with G-Cter in SUMO2); alternate. Position 85 is an N6-acetyllysine (Lys85). A Glycyl lysine isopeptide (Lys-Gly) (interchain with G-Cter in SUMO2) cross-link involves residue Lys154.

This sequence belongs to the universal ribosomal protein uL5 family. As to quaternary structure, component of the large ribosomal subunit (LSU). Part of the 5S RNP complex, which is a LSU subcomplex composed of the 5S RNA, RPL5 and RPL11. Component of a hexameric 5S RNP precursor complex, composed of 5S RNA, RRS1, RPF2/BXDC1, RPL5, RPL11 and HEATR3; this complex acts as a precursor for ribosome assembly. Interacts with PML. Interacts with MDM2 (via its RanBP2-type zinc finger domain); negatively regulates MDM2-mediated TP53 ubiquitination and degradation. Interacts with NOP53; retains RPL11 into the nucleolus.

The protein resides in the nucleus. It localises to the nucleolus. The protein localises to the cytoplasm. Component of the ribosome, a large ribonucleoprotein complex responsible for the synthesis of proteins in the cell. The small ribosomal subunit (SSU) binds messenger RNAs (mRNAs) and translates the encoded message by selecting cognate aminoacyl-transfer RNA (tRNA) molecules. The large subunit (LSU) contains the ribosomal catalytic site termed the peptidyl transferase center (PTC), which catalyzes the formation of peptide bonds, thereby polymerizing the amino acids delivered by tRNAs into a polypeptide chain. The nascent polypeptides leave the ribosome through a tunnel in the LSU and interact with protein factors that function in enzymatic processing, targeting, and the membrane insertion of nascent chains at the exit of the ribosomal tunnel. As part of the 5S RNP/5S ribonucleoprotein particle it is an essential component of the LSU, required for its formation and the maturation of rRNAs. It also couples ribosome biogenesis to p53/TP53 activation. As part of the 5S RNP it accumulates in the nucleoplasm and inhibits MDM2, when ribosome biogenesis is perturbed, mediating the stabilization and the activation of TP53. Promotes nucleolar location of PML. In Pongo abelii (Sumatran orangutan), this protein is Large ribosomal subunit protein uL5 (RPL11).